We begin with the raw amino-acid sequence, 265 residues long: Gamma-secretase subunit APH-1A (265 aa).

Residues 1-2 (MG) are Lumenal-facing. The helical transmembrane segment at 3-23 (AAVFFGCTFVAFGPAFSLFLI) threads the bilayer. Residues 24-31 (TVAGDPLR) are Cytoplasmic-facing. Residues 32–52 (VIILVAGAFFWLVSLLLASVV) form a helical membrane-spanning segment. Residues 53-68 (WFILVHVTDRSDARLQ) lie on the Lumenal side of the membrane. A helical membrane pass occupies residues 69–89 (YGLLIFGAAVSVLLQEVFRFA). The Cytoplasmic segment spans residues 90–118 (YYKLLKKADEGLASLSEDGRSPISIRQMA). The chain crosses the membrane as a helical span at residues 119-139 (YVSGLSFGIISGVFSVINILA). The Lumenal segment spans residues 140-158 (DALGPGVVGIHGDSPYYFL). Residues 159-179 (TSAFLTAAIILLHTFWGVVFF) traverse the membrane as a helical segment. The Cytoplasmic portion of the chain corresponds to 180–186 (DACERRR). A helical membrane pass occupies residues 187 to 207 (YWALGLVVGSHLLTSGLTFLN). Residues 208 to 213 (PWYEAS) are Lumenal-facing. A helical membrane pass occupies residues 214–234 (LLPIYAVTVSMGLWAFITAGG). The Cytoplasmic portion of the chain corresponds to 235–265 (SLRSIQRSLSCRRQEDSRVMVYSALRIPPED).

Belongs to the APH-1 family. As to quaternary structure, the functional gamma-secretase complex is composed of at least four polypeptides: a presenilin homodimer (PSEN1 or PSEN2), nicastrin (NCSTN), APH1 (APH1A or APH1B) and PSENEN/PEN2.

It is found in the endoplasmic reticulum membrane. Its subcellular location is the golgi apparatus. The protein resides in the golgi stack membrane. In terms of biological role, non-catalytic subunit of the gamma-secretase complex, an endoprotease complex that catalyzes the intramembrane cleavage of integral membrane proteins such as Notch receptors and APP (amyloid-beta precursor protein). Required for normal gamma-secretase assembly. The gamma-secretase complex plays a role in Notch and Wnt signaling cascades and regulation of downstream processes via its role in processing key regulatory proteins, and by regulating cytosolic CTNNB1 levels. This is Gamma-secretase subunit APH-1A (Aph1a) from Mus musculus (Mouse).